Consider the following 140-residue polypeptide: Nucleoside diphosphate kinase (140 aa).

The ATP site is built by K11, F59, R87, T93, R104, and N114. H117 acts as the Pros-phosphohistidine intermediate in catalysis.

It belongs to the NDK family. Homotetramer. It depends on Mg(2+) as a cofactor.

It localises to the cytoplasm. The enzyme catalyses a 2'-deoxyribonucleoside 5'-diphosphate + ATP = a 2'-deoxyribonucleoside 5'-triphosphate + ADP. It catalyses the reaction a ribonucleoside 5'-diphosphate + ATP = a ribonucleoside 5'-triphosphate + ADP. Its function is as follows. Major role in the synthesis of nucleoside triphosphates other than ATP. The ATP gamma phosphate is transferred to the NDP beta phosphate via a ping-pong mechanism, using a phosphorylated active-site intermediate. This Rhizobium rhizogenes (strain K84 / ATCC BAA-868) (Agrobacterium radiobacter) protein is Nucleoside diphosphate kinase.